The primary structure comprises 114 residues: Nucleoid-associated protein MAB_0319 (114 aa).

This sequence belongs to the YbaB/EbfC family. In terms of assembly, homodimer.

The protein localises to the cytoplasm. Its subcellular location is the nucleoid. Binds to DNA and alters its conformation. May be involved in regulation of gene expression, nucleoid organization and DNA protection. The sequence is that of Nucleoid-associated protein MAB_0319 from Mycobacteroides abscessus (strain ATCC 19977 / DSM 44196 / CCUG 20993 / CIP 104536 / JCM 13569 / NCTC 13031 / TMC 1543 / L948) (Mycobacterium abscessus).